Here is a 145-residue protein sequence, read N- to C-terminus: Cystatin-F (145 aa).

The first 19 residues, 1 to 19 (MRAAGTLLAFCCLVLSTTG), serve as a signal peptide directing secretion. An N-linked (GlcNAc...) asparagine glycan is attached at Asn62. The short motif at 81-85 (QIVKG) is the Secondary area of contact element. Residues Cys99 and Cys110 are joined by a disulfide bond. A glycan (N-linked (GlcNAc...) asparagine) is linked at Asn115. An intrachain disulfide couples Cys124 to Cys144.

Belongs to the cystatin family. As to quaternary structure, homodimer; disulfide-linked. As to expression, primarily expressed in peripheral blood cells and spleen.

It localises to the secreted. It is found in the cytoplasm. Functionally, inhibits papain and cathepsin L but with affinities lower than other cystatins. May play a role in immune regulation through inhibition of a unique target in the hematopoietic system. The chain is Cystatin-F (CST7) from Homo sapiens (Human).